A 354-amino-acid polypeptide reads, in one-letter code: Nicotinate-nucleotide--dimethylbenzimidazole phosphoribosyltransferase (354 aa).

The active-site Proton acceptor is Glu319.

Belongs to the CobT family.

The catalysed reaction is 5,6-dimethylbenzimidazole + nicotinate beta-D-ribonucleotide = alpha-ribazole 5'-phosphate + nicotinate + H(+). It participates in nucleoside biosynthesis; alpha-ribazole biosynthesis; alpha-ribazole from 5,6-dimethylbenzimidazole: step 1/2. Functionally, catalyzes the synthesis of alpha-ribazole-5'-phosphate from nicotinate mononucleotide (NAMN) and 5,6-dimethylbenzimidazole (DMB). The chain is Nicotinate-nucleotide--dimethylbenzimidazole phosphoribosyltransferase from Pelodictyon phaeoclathratiforme (strain DSM 5477 / BU-1).